Consider the following 1295-residue polypeptide: Protein glp-1 (1295 aa).

A signal peptide spans 1-15; sequence MRVLLILLAFFAPIA. The Extracellular portion of the chain corresponds to 16-764; that stretch reads SQLMGGECGR…NEIDEGWSRS (749 aa). EGF-like domains follow at residues 19–58, 117–152, 154–190, and 190–230; these read MGGE…AFCE, GVNP…SYCE, GIDH…RYCE, and ERTE…EFCN. Disulfide bonds link Cys23/Cys35, Cys29/Cys46, Cys48/Cys57, Cys121/Cys131, Cys126/Cys140, Cys142/Cys151, Cys158/Cys169, Cys163/Cys178, Cys180/Cys189, Cys201/Cys206, Cys220/Cys229, Cys236/Cys248, Cys242/Cys257, Cys259/Cys268, Cys275/Cys286, Cys280/Cys296, Cys298/Cys307, Cys329/Cys342, Cys336/Cys347, Cys349/Cys358, Cys373/Cys384, Cys378/Cys394, Cys396/Cys405, Cys411/Cys422, Cys416/Cys431, Cys433/Cys442, Cys450/Cys461, Cys455/Cys467, Cys469/Cys478, Cys496/Cys519, Cys501/Cys514, Cys510/Cys526, Cys536/Cys560, Cys542/Cys555, Cys551/Cys567, Cys582/Cys595, and Cys591/Cys607. The region spanning 232 to 269 is the EGF-like 5; calcium-binding domain; it reads DKNECLIEETCVNNSTCFNLHGDFTCTCKPGYAGKYCE. Residues Asn244 and Asn245 are each glycosylated (N-linked (GlcNAc...) asparagine). EGF-like domains lie at 271 to 308, 316 to 359, 369 to 406, 407 to 443, and 446 to 479; these read AIDM…QRCE, GGIH…DRCE, DIQS…LNCE, QHLL…DYCE, and DRQL…PTCE. Asn333 carries N-linked (GlcNAc...) asparagine glycosylation. Asn381 carries an N-linked (GlcNAc...) asparagine glycan. LNR repeat units lie at residues 496–532, 536–577, and 581–612; these read CEQR…GQRP, CQYP…CPAH, and HCIE…NGTE. Residues Asn609 and Asn675 are each glycosylated (N-linked (GlcNAc...) asparagine). A helical membrane pass occupies residues 765-786; it reads QVILFACIAFLAFGTVVAGVIA. Residues 787 to 1295 are Cytoplasmic-facing; that stretch reads KNGPERSRKR…AEQMNGSFYC (509 aa). ANK repeat units lie at residues 961-990, 994-1023, 1030-1062, 1074-1103, and 1107-1136; these read DENT…NPTI, SERS…LLKE, NGMT…KLDY, KGRT…NKDK, and DGRT…SLGI. A disordered region spans residues 1177–1244; it reads IVKSGHGAKS…TTSTPNRMET (68 aa). Over residues 1201–1210 the composition is skewed to polar residues; sequence KTPTSAASSR. The span at 1221–1239 shows a compositional bias: low complexity; the sequence is DGSFSSPSPHYYPTTTSTP.

In terms of assembly, interacts with sel-10. As to quaternary structure, when activated, the glp-1/Notch intracellular domain (NICD) may become a component of a complex consisting of at least the NICD, lag-1 and lag-3. Upon binding its ligands, it is cleaved (S2 cleavage) in its extracellular domain, close to the transmembrane domain. S2 cleavage is probably mediated by the metalloproteases adm-4 and sup-17. It is then cleaved (S3 cleavage) downstream of its transmembrane domain, releasing it from the cell membrane; S3 cleavage requires a multiprotein gamma-secretase complex, which may include presenilin sel-12. In terms of tissue distribution, expressed in the distal mitotic region of the germ line. May be absent from the gonadal distal tip cell (DTC).

The protein resides in the cell membrane. It is found in the cell projection. The protein localises to the axon. Its subcellular location is the nucleus. Its function is as follows. Essential signaling protein which has a major role in germline and embryonic development; involved in cell fate decisions that require cell-cell interactions. Probable membrane-bound receptor for putative ligands lag-2 and apx-1. Upon ligand activation, and releasing from the cell membrane, the glp-1/Notch intracellular domain (NICD) probably forms a transcriptional activator complex with lag-1 and lag-3 and regulates expression of various genes; targets in the germline include lst-1 and sygl-1. Involved in the specification of the cell fates of the blastomeres, ABa and ABp. Proper signaling by glp-1 induces ABa descendants to produce anterior pharyngeal cells, and ABp descendants to adopt a different fate. Contributes to the establishment of the dorsal-ventral axis in early embryos. Required in postmitotic neurons in order to maintain the developmentally arrested larval state known as dauer, probably in response to lag-2. Regulates germ cell mitotic proliferation probably by regulating MAP kinase phosphatase lip-1 expression. Required for oocyte growth control. Plays a negative role in lifespan. This Caenorhabditis elegans protein is Protein glp-1.